The chain runs to 325 residues: Large ribosomal subunit protein uL1m (325 aa).

The N-terminal 50 residues, 1–50, are a transit peptide targeting the mitochondrion; it reads MAAAVRCMGRALIHHQRHSLSKMVYQTSLCSCSVNIRVPNRHFAAATKSA.

The protein belongs to the universal ribosomal protein uL1 family. As to quaternary structure, component of the mitochondrial large ribosomal subunit (mt-LSU). Mature mammalian 55S mitochondrial ribosomes consist of a small (28S) and a large (39S) subunit. The 28S small subunit contains a 12S ribosomal RNA (12S mt-rRNA) and 30 different proteins. The 39S large subunit contains a 16S rRNA (16S mt-rRNA), a copy of mitochondrial valine transfer RNA (mt-tRNA(Val)), which plays an integral structural role, and 52 different proteins.

It localises to the mitochondrion. In Homo sapiens (Human), this protein is Large ribosomal subunit protein uL1m (MRPL1).